Here is a 167-residue protein sequence, read N- to C-terminus: NAD(P)H-quinone oxidoreductase subunit I, chloroplastic (167 aa).

4Fe-4S ferredoxin-type domains are found at residues 55-84 (GRIH…VDWK) and 95-124 (LNYS…MTEE). Residues Cys64, Cys67, Cys70, Cys74, Cys104, Cys107, Cys110, and Cys114 each coordinate [4Fe-4S] cluster.

This sequence belongs to the complex I 23 kDa subunit family. In terms of assembly, NDH is composed of at least 16 different subunits, 5 of which are encoded in the nucleus. [4Fe-4S] cluster is required as a cofactor.

It localises to the plastid. The protein resides in the chloroplast thylakoid membrane. It carries out the reaction a plastoquinone + NADH + (n+1) H(+)(in) = a plastoquinol + NAD(+) + n H(+)(out). The catalysed reaction is a plastoquinone + NADPH + (n+1) H(+)(in) = a plastoquinol + NADP(+) + n H(+)(out). In terms of biological role, NDH shuttles electrons from NAD(P)H:plastoquinone, via FMN and iron-sulfur (Fe-S) centers, to quinones in the photosynthetic chain and possibly in a chloroplast respiratory chain. The immediate electron acceptor for the enzyme in this species is believed to be plastoquinone. Couples the redox reaction to proton translocation, and thus conserves the redox energy in a proton gradient. The protein is NAD(P)H-quinone oxidoreductase subunit I, chloroplastic of Aethionema cordifolium (Lebanon stonecress).